The chain runs to 163 residues: Xanthine-guanine phosphoribosyltransferase (163 aa).

5-phospho-alpha-D-ribose 1-diphosphate contacts are provided by residues 43–44 (RG) and 95–103 (DDLVDTGGT). Mg(2+) is bound at residue D96. The guanine site is built by D99 and I142. Xanthine is bound by residues D99 and I142. Residues 99–103 (DTGGT) and 141–142 (WI) each bind GMP.

The protein belongs to the purine/pyrimidine phosphoribosyltransferase family. XGPT subfamily. Homotetramer. Requires Mg(2+) as cofactor.

The protein localises to the cell inner membrane. The catalysed reaction is GMP + diphosphate = guanine + 5-phospho-alpha-D-ribose 1-diphosphate. It catalyses the reaction XMP + diphosphate = xanthine + 5-phospho-alpha-D-ribose 1-diphosphate. It carries out the reaction IMP + diphosphate = hypoxanthine + 5-phospho-alpha-D-ribose 1-diphosphate. The protein operates within purine metabolism; GMP biosynthesis via salvage pathway; GMP from guanine: step 1/1. It participates in purine metabolism; XMP biosynthesis via salvage pathway; XMP from xanthine: step 1/1. Functionally, purine salvage pathway enzyme that catalyzes the transfer of the ribosyl-5-phosphate group from 5-phospho-alpha-D-ribose 1-diphosphate (PRPP) to the N9 position of the 6-oxopurines guanine and xanthine to form the corresponding ribonucleotides GMP (guanosine 5'-monophosphate) and XMP (xanthosine 5'-monophosphate), with the release of PPi. To a lesser extent, also acts on hypoxanthine. The polypeptide is Xanthine-guanine phosphoribosyltransferase (Nitratidesulfovibrio vulgaris (strain DP4) (Desulfovibrio vulgaris)).